A 264-amino-acid chain; its full sequence is Myozenin-2 (264 aa).

An Omega-N-methylarginine modification is found at arginine 53. The disordered stretch occupies residues 98–134 (ESGSQQAPFTPPNTPDPRSPPNPENIAPGYSGPLKEI). Serine 101 carries the post-translational modification Phosphoserine. Positions 106–120 (FTPPNTPDPRSPPNP) are enriched in pro residues. Threonine 107 and threonine 111 each carry phosphothreonine. Serine 116 bears the Phosphoserine mark.

It belongs to the myozenin family. As to quaternary structure, interacts via its C-terminus with spectrin repeats 3 and 4 of ACTN2. Interacts with ACTN1, LDB3, MYOT and PPP3CA.

The protein localises to the cytoplasm. It localises to the myofibril. It is found in the sarcomere. The protein resides in the z line. In terms of biological role, myozenins may serve as intracellular binding proteins involved in linking Z line proteins such as alpha-actinin, gamma-filamin, TCAP/telethonin, LDB3/ZASP and localizing calcineurin signaling to the sarcomere. Plays an important role in the modulation of calcineurin signaling. May play a role in myofibrillogenesis. This is Myozenin-2 (MYOZ2) from Bos taurus (Bovine).